The chain runs to 166 residues: HTH-type transcriptional regulator PrsX (166 aa).

The HTH marR-type domain occupies 25-159 (EHLLMQLCIR…FEVINKKLLA (135 aa)).

The protein localises to the cytoplasm. This is HTH-type transcriptional regulator PrsX (prsX) from Escherichia coli O6:H1 (strain CFT073 / ATCC 700928 / UPEC).